The primary structure comprises 231 residues: Augmin complex subunit dgt2 (231 aa).

A coiled-coil region spans residues 128–199; sequence QEADLSCDQK…VQTKAELLRG (72 aa).

In terms of assembly, component of the augmin complex composed of dgt2, dgt3, dgt4, dgt5, dgt6, msd1, msd5 and wac. The complex interacts directly or indirectly with microtubules and is required for centrosome-independent generation of spindle microtubules. dgt2 interacts directly with wac (via coiled coil). In terms of tissue distribution, in adult females, detected only in the abdomen with no expression in the head or thorax (at protein level).

It localises to the cytoplasm. It is found in the cytoskeleton. Its subcellular location is the spindle. The protein localises to the spindle pole. In terms of biological role, as part of the augmin complex, plays a role in centrosome-independent generation of spindle microtubules. The complex is required for mitotic spindle assembly through its involvement in localizing gamma-tubulin to spindle microtubules. dgt2 binds to microtubules in vitro. This chain is Augmin complex subunit dgt2, found in Drosophila melanogaster (Fruit fly).